The sequence spans 283 residues: NAD(P)H-hydrate epimerase (283 aa).

The transit peptide at methionine 1 to cysteine 28 directs the protein to the mitochondrion. A YjeF N-terminal domain is found at alanine 61–leucine 270. Asparagine 115–aspartate 119 lines the (6S)-NADPHX pocket. Residues asparagine 116 and aspartate 180 each coordinate K(+). (6S)-NADPHX is bound by residues glycine 184–alanine 190 and aspartate 213. A K(+)-binding site is contributed by serine 216.

The protein belongs to the NnrE/AIBP family. Homodimer. Interacts with apoa1a. Binds to high-density lipoprotein. It depends on K(+) as a cofactor.

The protein localises to the mitochondrion. It localises to the secreted. The catalysed reaction is (6R)-NADHX = (6S)-NADHX. It catalyses the reaction (6R)-NADPHX = (6S)-NADPHX. Its function is as follows. Catalyzes the epimerization of the S- and R-forms of NAD(P)HX, a damaged form of NAD(P)H that is a result of enzymatic or heat-dependent hydration. This is a prerequisite for the S-specific NAD(P)H-hydrate dehydratase to allow the repair of both epimers of NAD(P)HX. This is NAD(P)H-hydrate epimerase from Danio rerio (Zebrafish).